The primary structure comprises 230 residues: Orotidine 5'-phosphate decarboxylase (230 aa).

Substrate-binding positions include Asp-11, Lys-34, 61–70, Thr-117, Arg-179, Gln-188, Gly-208, and Arg-209; that span reads DLKLHDIPNT. Lys-63 functions as the Proton donor in the catalytic mechanism.

The protein belongs to the OMP decarboxylase family. Type 1 subfamily. In terms of assembly, homodimer.

The enzyme catalyses orotidine 5'-phosphate + H(+) = UMP + CO2. It participates in pyrimidine metabolism; UMP biosynthesis via de novo pathway; UMP from orotate: step 2/2. Its function is as follows. Catalyzes the decarboxylation of orotidine 5'-monophosphate (OMP) to uridine 5'-monophosphate (UMP). In Streptococcus pyogenes serotype M18 (strain MGAS8232), this protein is Orotidine 5'-phosphate decarboxylase.